The following is a 528-amino-acid chain: Negative elongation factor A (528 aa).

The HDAg domain maps to 89 to 248; that stretch reads WVLMVADILK…TPIPPSRTLL (160 aa). The interval 125–188 is NELF-C/D-binding; it reads REKVGECEAS…LQKSTETAQQ (64 aa). T157 carries the post-translational modification Phosphothreonine. Residues 189 to 248 form an RNAPII-binding region; it reads LKRSAGVPFHAKGRGLLRKMDTTTPLKGIPKQAPFRSPTAPSVFSPTGNRTPIPPSRTLL. Residues 215–245 form a disordered region; that stretch reads KGIPKQAPFRSPTAPSVFSPTGNRTPIPPSR. A phosphoserine mark is found at S225 and S233. Positions 227 to 238 are enriched in polar residues; the sequence is TAPSVFSPTGNR. T277 is modified (phosphothreonine). Residues 320 to 341 are compositionally biased toward low complexity; it reads PSTSYLPSTPSVVPASSYIPSS. The segment at 320–409 is disordered; it reads PSTSYLPSTP…PPAVAPTTQT (90 aa). S363 carries the post-translational modification Phosphoserine.

It belongs to the NELF-A family. The NELF complex is composed of NELFA, NELFB, NELFCD (isoform NELF-C or isoform NELF-D) and NELFE; NELFA and NELFCD form a stable subcomplex that binds to the N-terminus of NELFB. In vitro, the NELFA:NELFCD subcomplex binds to ssDNA and ssRNA in a sequence- and structure-dependent manner. Interacts with the RNA polymerase II complex when it is not phosphorylated by P-TEFb. In terms of tissue distribution, ubiquitous. Expressed in heart, brain, placenta, liver, skeletal muscle, kidney and pancreas. Expressed at lower level in adult lung. Expressed in fetal brain, lung, liver and kidney.

It is found in the nucleus. In terms of biological role, essential component of the NELF complex, a complex that negatively regulates the elongation of transcription by RNA polymerase II. The NELF complex, which acts via an association with the DSIF complex and causes transcriptional pausing, is counteracted by the P-TEFb kinase complex. Functionally, (Microbial infection) The NELF complex is involved in HIV-1 latency possibly involving recruitment of PCF11 to paused RNA polymerase II. The polypeptide is Negative elongation factor A (NELFA) (Homo sapiens (Human)).